Consider the following 276-residue polypeptide: Probable ABC transporter permease protein NosY (276 aa).

The next 6 helical transmembrane spans lie at 20–40, 55–75, 111–131, 146–166, 179–199, and 251–271; these read WLLA…WLGA, IASL…LLAY, ILAL…ALLV, FMIS…VLSG, LGVW…LLVL, and VLWL…YAIF.

The complex may be composed of an ATP-binding protein (NosF), a transmembrane protein (NosY) and a solute-binding protein (NosD).

The protein resides in the cell inner membrane. In terms of biological role, required for the assembly of the copper chromophores of nitrous oxide reductase. Could be part of the ABC transporter complex NosDFY. The polypeptide is Probable ABC transporter permease protein NosY (Stutzerimonas stutzeri (Pseudomonas stutzeri)).